The sequence spans 277 residues: 4-hydroxy-tetrahydrodipicolinate reductase (277 aa).

An NAD(+)-binding site is contributed by 9–14 (GATGRM). Residue lysine 37 participates in NADP(+) binding. 75–77 (GTS) provides a ligand contact to NAD(+). Catalysis depends on histidine 132, which acts as the Proton donor/acceptor. Lysine 136 serves as the catalytic Proton donor. (S)-2,3,4,5-tetrahydrodipicolinate is bound at residue 142-143 (GT). The disordered stretch occupies residues 245 to 277 (SRERATQTAPTGAASGPVDDGGPSGQAATVTSA).

It belongs to the DapB family.

It localises to the cytoplasm. It carries out the reaction (S)-2,3,4,5-tetrahydrodipicolinate + NAD(+) + H2O = (2S,4S)-4-hydroxy-2,3,4,5-tetrahydrodipicolinate + NADH + H(+). The catalysed reaction is (S)-2,3,4,5-tetrahydrodipicolinate + NADP(+) + H2O = (2S,4S)-4-hydroxy-2,3,4,5-tetrahydrodipicolinate + NADPH + H(+). It participates in amino-acid biosynthesis; L-lysine biosynthesis via DAP pathway; (S)-tetrahydrodipicolinate from L-aspartate: step 4/4. Catalyzes the conversion of 4-hydroxy-tetrahydrodipicolinate (HTPA) to tetrahydrodipicolinate. The sequence is that of 4-hydroxy-tetrahydrodipicolinate reductase from Clavibacter sepedonicus (Clavibacter michiganensis subsp. sepedonicus).